The chain runs to 294 residues: Protein CHLOROPLAST J-LIKE DOMAIN 1, chloroplastic (294 aa).

Residues methionine 1–arginine 58 constitute a chloroplast transit peptide. The Stromal segment spans residues alanine 59–asparagine 164. A J-like domain region spans residues asparagine 74–isoleucine 152. A helical membrane pass occupies residues aspartate 165–isoleucine 182. At lysine 183–arginine 233 the chain is on the chloroplast intermembrane side. Residues leucine 234–leucine 256 traverse the membrane as a helical segment. Residues asparagine 257–glutamate 275 are Stromal-facing. The chain crosses the membrane as a helical span at residues leucine 276–tyrosine 293. A topological domain (chloroplast intermembrane) is located at residue arginine 294.

Interacts (via J-like domain) with ARC6 (via J domain).

The protein localises to the plastid. It localises to the chloroplast inner membrane. Functionally, probably involved in the regulation of the fatty acid metabolic process in chloroplasts, especially chloroplastic galactolipids monogalactosyldiacylglycerol (MGDG) and digalactosyldiacylglycerol (DGDG). This Arabidopsis thaliana (Mouse-ear cress) protein is Protein CHLOROPLAST J-LIKE DOMAIN 1, chloroplastic.